A 493-amino-acid polypeptide reads, in one-letter code: Cytoplasmic tRNA 2-thiolation protein 2 (493 aa).

Ser-489 is subject to Phosphoserine.

Belongs to the CTU2/NCS2 family. As to quaternary structure, interacts with NCS6 and URM1. May act by forming a heterodimer with NCS6.

The protein resides in the cytoplasm. It functions in the pathway tRNA modification; 5-methoxycarbonylmethyl-2-thiouridine-tRNA biosynthesis. Plays a central role in 2-thiolation of mcm(5)S(2)U at tRNA wobble positions of tRNA(Lys), tRNA(Glu) and tRNA(Gln). May act by forming a heterodimer with NCS6 that ligates sulfur from thiocarboxylated URM1 onto the uridine of tRNAs at wobble position. Prior mcm(5) tRNA modification by the elongator complex is required for 2-thiolation. May also be involved in protein urmylation. In Saccharomyces cerevisiae (strain YJM789) (Baker's yeast), this protein is Cytoplasmic tRNA 2-thiolation protein 2.